We begin with the raw amino-acid sequence, 215 residues long: Small ribosomal subunit protein eS1 (215 aa).

The segment at 195–215 is disordered; that stretch reads SGMQEPQKNEPAPGGEAIAQN.

The protein belongs to the eukaryotic ribosomal protein eS1 family.

In Thermoplasma acidophilum (strain ATCC 25905 / DSM 1728 / JCM 9062 / NBRC 15155 / AMRC-C165), this protein is Small ribosomal subunit protein eS1.